The primary structure comprises 197 residues: MLTGLFFGSFNPMHIGHLALANYLTEYTPIRQLWFVPSPLNPLKNTQELLPYDLRCELIEQAIRKDIRFQVLRIEELLPSPHYTIRTLRALSMLYPHHRFALLIGADNWQSFDRWKDHHRLMAKYELIIYPRFGYEVNDTTLPTGCRYIHDAPRIEISSTQIRTSILEGKDLRYWLPLPESQDVIASALQSCLSPKR.

It belongs to the NadD family.

It catalyses the reaction nicotinate beta-D-ribonucleotide + ATP + H(+) = deamido-NAD(+) + diphosphate. It functions in the pathway cofactor biosynthesis; NAD(+) biosynthesis; deamido-NAD(+) from nicotinate D-ribonucleotide: step 1/1. Functionally, catalyzes the reversible adenylation of nicotinate mononucleotide (NaMN) to nicotinic acid adenine dinucleotide (NaAD). This Porphyromonas gingivalis (strain ATCC 33277 / DSM 20709 / CIP 103683 / JCM 12257 / NCTC 11834 / 2561) protein is Probable nicotinate-nucleotide adenylyltransferase.